A 170-amino-acid chain; its full sequence is Probable peptide methionine sulfoxide reductase (170 aa).

This sequence belongs to the MsrA Met sulfoxide reductase family.

Its subcellular location is the cytoplasm. The protein localises to the nucleus. It catalyses the reaction L-methionyl-[protein] + [thioredoxin]-disulfide + H2O = L-methionyl-(S)-S-oxide-[protein] + [thioredoxin]-dithiol. It carries out the reaction [thioredoxin]-disulfide + L-methionine + H2O = L-methionine (S)-S-oxide + [thioredoxin]-dithiol. Has an important function as a repair enzyme for proteins that have been inactivated by oxidation. Catalyzes the reversible oxidation-reduction of methionine sulfoxide in proteins to methionine. The sequence is that of Probable peptide methionine sulfoxide reductase (mxr1) from Schizosaccharomyces pombe (strain 972 / ATCC 24843) (Fission yeast).